Here is a 272-residue protein sequence, read N- to C-terminus: uncharacterized protein (272 aa).

The protein localises to the periplasm. Its function is as follows. May be involved in ulvan degradation. Ulvan is the main polysaccharide component of the Ulvales (green seaweed) cell wall. It is composed of disaccharide building blocks comprising 3-sulfated rhamnose (Rha3S) linked to D-glucuronic acid (GlcA), L-iduronic acid (IduA), or D-xylose (Xyl). This is an uncharacterized protein from Formosa agariphila (strain DSM 15362 / KCTC 12365 / LMG 23005 / KMM 3901 / M-2Alg 35-1).